Consider the following 374-residue polypeptide: Queuine tRNA-ribosyltransferase (374 aa).

Catalysis depends on aspartate 89, which acts as the Proton acceptor. Residues 89–93 (DSGGF), aspartate 143, glutamine 187, and glycine 214 each bind substrate. Residues 245–251 (GVGKPED) are RNA binding. Aspartate 264 functions as the Nucleophile in the catalytic mechanism. The interval 269-273 (TRNAR) is RNA binding; important for wobble base 34 recognition. Positions 302, 304, 307, and 333 each coordinate Zn(2+).

This sequence belongs to the queuine tRNA-ribosyltransferase family. Homodimer. Within each dimer, one monomer is responsible for RNA recognition and catalysis, while the other monomer binds to the replacement base PreQ1. Requires Zn(2+) as cofactor.

It catalyses the reaction 7-aminomethyl-7-carbaguanine + guanosine(34) in tRNA = 7-aminomethyl-7-carbaguanosine(34) in tRNA + guanine. It functions in the pathway tRNA modification; tRNA-queuosine biosynthesis. Functionally, catalyzes the base-exchange of a guanine (G) residue with the queuine precursor 7-aminomethyl-7-deazaguanine (PreQ1) at position 34 (anticodon wobble position) in tRNAs with GU(N) anticodons (tRNA-Asp, -Asn, -His and -Tyr). Catalysis occurs through a double-displacement mechanism. The nucleophile active site attacks the C1' of nucleotide 34 to detach the guanine base from the RNA, forming a covalent enzyme-RNA intermediate. The proton acceptor active site deprotonates the incoming PreQ1, allowing a nucleophilic attack on the C1' of the ribose to form the product. After dissociation, two additional enzymatic reactions on the tRNA convert PreQ1 to queuine (Q), resulting in the hypermodified nucleoside queuosine (7-(((4,5-cis-dihydroxy-2-cyclopenten-1-yl)amino)methyl)-7-deazaguanosine). This is Queuine tRNA-ribosyltransferase from Shewanella baltica (strain OS185).